The chain runs to 425 residues: D-amino acid dehydrogenase (425 aa).

3–17 (VLVMGAGVIGVTTAY) serves as a coordination point for FAD.

It belongs to the DadA oxidoreductase family. FAD is required as a cofactor.

The catalysed reaction is a D-alpha-amino acid + A + H2O = a 2-oxocarboxylate + AH2 + NH4(+). The protein operates within amino-acid degradation; D-alanine degradation; NH(3) and pyruvate from D-alanine: step 1/1. Oxidative deamination of D-amino acids. This Rhodopseudomonas palustris (strain HaA2) protein is D-amino acid dehydrogenase.